The following is a 372-amino-acid chain: 4-hydroxy-3-methylbut-2-en-1-yl diphosphate synthase (flavodoxin) (372 aa).

Residues Cys-270, Cys-273, Cys-305, and Glu-312 each contribute to the [4Fe-4S] cluster site.

This sequence belongs to the IspG family. The cofactor is [4Fe-4S] cluster.

It carries out the reaction (2E)-4-hydroxy-3-methylbut-2-enyl diphosphate + oxidized [flavodoxin] + H2O + 2 H(+) = 2-C-methyl-D-erythritol 2,4-cyclic diphosphate + reduced [flavodoxin]. It functions in the pathway isoprenoid biosynthesis; isopentenyl diphosphate biosynthesis via DXP pathway; isopentenyl diphosphate from 1-deoxy-D-xylulose 5-phosphate: step 5/6. In terms of biological role, converts 2C-methyl-D-erythritol 2,4-cyclodiphosphate (ME-2,4cPP) into 1-hydroxy-2-methyl-2-(E)-butenyl 4-diphosphate. This Shigella boydii serotype 18 (strain CDC 3083-94 / BS512) protein is 4-hydroxy-3-methylbut-2-en-1-yl diphosphate synthase (flavodoxin).